Consider the following 361-residue polypeptide: Homocitrate synthase (361 aa).

One can recognise a Pyruvate carboxyltransferase domain in the interval 1–249 (MILDSTLREG…VKKYRLDKLY (249 aa)). Position 8 (arginine 8) interacts with 2-oxoglutarate. Residue glutamate 9 participates in Mg(2+) binding. 3 residues coordinate 2-oxoglutarate: histidine 68, arginine 128, and threonine 162. Histidine 188 and histidine 190 together coordinate Mg(2+). The Proton acceptor role is filled by histidine 282.

It belongs to the alpha-IPM synthase/homocitrate synthase family. Homocitrate synthase LYS20/LYS21 subfamily. The cofactor is Mg(2+). Mn(2+) is required as a cofactor.

The catalysed reaction is acetyl-CoA + 2-oxoglutarate + H2O = (2R)-homocitrate + CoA + H(+). It participates in amino-acid biosynthesis; L-lysine biosynthesis via AAA pathway; L-alpha-aminoadipate from 2-oxoglutarate: step 1/5. Catalyzes the aldol-type condensation of 2-oxoglutarate with acetyl-CoA to yield homocitrate. Carries out the first step of the alpha-aminoadipate (AAA) lysine biosynthesis pathway. This is Homocitrate synthase from Pyrococcus horikoshii (strain ATCC 700860 / DSM 12428 / JCM 9974 / NBRC 100139 / OT-3).